The primary structure comprises 143 residues: MAIERTFSIIKPDAVAKNHIGAIYNRFESAGLKIIAAKMVHLTKEQAEGFYAEHSERPFFGALVSFMTSGPIMVQVLEGENAVLANREIMGATNPAQAARGTLRADYAASIDENAVHGSDALASAEREIAYFFAADELCPRTR.

6 residues coordinate ATP: lysine 11, phenylalanine 59, arginine 87, threonine 93, arginine 104, and asparagine 114. The Pros-phosphohistidine intermediate role is filled by histidine 117.

It belongs to the NDK family. In terms of assembly, homotetramer. The cofactor is Mg(2+).

The protein resides in the cytoplasm. It carries out the reaction a 2'-deoxyribonucleoside 5'-diphosphate + ATP = a 2'-deoxyribonucleoside 5'-triphosphate + ADP. It catalyses the reaction a ribonucleoside 5'-diphosphate + ATP = a ribonucleoside 5'-triphosphate + ADP. Major role in the synthesis of nucleoside triphosphates other than ATP. The ATP gamma phosphate is transferred to the NDP beta phosphate via a ping-pong mechanism, using a phosphorylated active-site intermediate. The polypeptide is Nucleoside diphosphate kinase (Shewanella amazonensis (strain ATCC BAA-1098 / SB2B)).